Consider the following 98-residue polypeptide: NADH-ubiquinone oxidoreductase chain 4L (98 aa).

The next 3 membrane-spanning stretches (helical) occupy residues 1-21 (MSLVHMNIGLAFTVAFLGLLM), 29-49 (SLLCLEGMMLTLFIMSSIMVL), and 61-81 (IILLVFAACEAAVGLSLLVMV).

Belongs to the complex I subunit 4L family. As to quaternary structure, core subunit of respiratory chain NADH dehydrogenase (Complex I) which is composed of 45 different subunits.

It localises to the mitochondrion inner membrane. It carries out the reaction a ubiquinone + NADH + 5 H(+)(in) = a ubiquinol + NAD(+) + 4 H(+)(out). In terms of biological role, core subunit of the mitochondrial membrane respiratory chain NADH dehydrogenase (Complex I) which catalyzes electron transfer from NADH through the respiratory chain, using ubiquinone as an electron acceptor. Part of the enzyme membrane arm which is embedded in the lipid bilayer and involved in proton translocation. This is NADH-ubiquinone oxidoreductase chain 4L (MT-ND4L) from Pseudosoriculus fumidus (Taiwanese brown-toothed shrew).